The following is a 485-amino-acid chain: Programmed cell death protein 7 (485 aa).

The segment at Met1 to Leu133 is disordered. Pro residues predominate over residues Pro12 to Phe48. A compositionally biased stretch (low complexity) spans Pro49–Ser71. Pro residues-rich tracts occupy residues Pro82–Arg96 and Pro109–Ala130. Coiled coils occupy residues Val232–Arg335 and Arg362–Leu411.

Interacts with RBM40. Component of the U11/U12 snRNPs that are part of the U12-type spliceosome.

The protein resides in the nucleus. Functionally, promotes apoptosis when overexpressed. This chain is Programmed cell death protein 7 (PDCD7), found in Homo sapiens (Human).